The sequence spans 170 residues: Small ribosomal subunit protein bS18c (170 aa).

Disordered stretches follow at residues 1–59 and 151–170; these read MYIS…IGPG and NLRN…SSDC. Repeats lie at residues 4-10, 11-17, 18-24, 25-31, 32-38, 39-45, and 46-52; these read SKQPFRK, SKQTFHK, FKQPFRK, and SKQPFRR. Positions 4-52 are 7 X 7 AA tandem repeats; sequence SKQPFRKSKQPFRKSKQTFHKSKQPFRKFKQPFRKSKQPFRKSKQPFRR. Over residues 7 to 55 the composition is skewed to basic residues; that stretch reads PFRKSKQPFRKSKQTFHKSKQPFRKFKQPFRKSKQPFRKSKQPFRRRSR.

This sequence belongs to the bacterial ribosomal protein bS18 family. Part of the 30S ribosomal subunit.

Its subcellular location is the plastid. The protein resides in the chloroplast. This Zea mays (Maize) protein is Small ribosomal subunit protein bS18c (rps18).